Here is a 200-residue protein sequence, read N- to C-terminus: Small ribosomal subunit protein uS4 (200 aa).

Residues 1 to 13 are compositionally biased toward basic residues; that stretch reads MARYRGPKQKIAR. Residues 1–44 form a disordered region; the sequence is MARYRGPKQKIARRFKEPIFGPSKALERKPYPPGQHGQSRRRRE. Residues 92-154 enclose the S4 RNA-binding domain; sequence ARLDNTVFRM…SQDLEVIQTN (63 aa).

The protein belongs to the universal ribosomal protein uS4 family. In terms of assembly, part of the 30S ribosomal subunit. Contacts protein S5. The interaction surface between S4 and S5 is involved in control of translational fidelity.

One of the primary rRNA binding proteins, it binds directly to 16S rRNA where it nucleates assembly of the body of the 30S subunit. Functionally, with S5 and S12 plays an important role in translational accuracy. This chain is Small ribosomal subunit protein uS4, found in Salinibacter ruber (strain DSM 13855 / M31).